A 462-amino-acid chain; its full sequence is MSDETMPVEFLVSDKRLLKTIKVKLETNGLFVTPIYSDNDNKVIKSSIEDLNHPLAVEINNIAGVKARFHESGNLERSEGHLKHQSNSITEFTKSFLKDHGLANDKIFLSHLLDHLPLKYTIYPPVVLFNNSTVRSFNHPIWQKAFQLKLFDPNEYYRELLCFLSPGKPSKGTSLHPNNRLLTHLAINNPITEADVLRRPFNIQPLYGKLIDDSILDDNDNTLWENPSQEQLNSSIWCKVIQNGVTQIWSPVFTMFSRGNIKEKKRVLTTFPDICNNDVVDLYAGIGYFTFSYLTKGARTLFAFELNPWSVEGLKRGLKANGFNKSGNCHVFQESNEMCVQRLTEFLSQNPGFRLRIRHINLGLLPSSKQGWPLAIKLIYLQGASLEKVTMHIHENVHIDAIEDGSFEKNVIVELDAINESIALIRNRGIKLQFVRSKLERIKTFAPDIWHVCVDVDVIVST.

S-adenosyl-L-methionine contacts are provided by residues serine 257, lysine 264, and 305 to 306 (EL).

This sequence belongs to the class I-like SAM-binding methyltransferase superfamily. TRM5/TYW2 family.

It localises to the cytoplasm. It catalyses the reaction 4-demethylwyosine(37) in tRNA(Phe) + S-adenosyl-L-methionine = 4-demethyl-7-[(3S)-3-amino-3-carboxypropyl]wyosine(37) in tRNA(Phe) + S-methyl-5'-thioadenosine + H(+). It participates in tRNA modification; wybutosine-tRNA(Phe) biosynthesis. Its function is as follows. S-adenosyl-L-methionine-dependent transferase that acts as a component of the wybutosine biosynthesis pathway. Wybutosine is a hyper modified guanosine with a tricyclic base found at the 3'-position adjacent to the anticodon of eukaryotic phenylalanine tRNA. Catalyzes the transfer of the alpha-amino-alpha-carboxypropyl (acp) group from S-adenosyl-L-methionine to the C-7 position of 4-demethylwyosine (imG-14) to produce wybutosine-86. This is tRNA wybutosine-synthesizing protein 2 (TRM12) from Saccharomyces cerevisiae (strain ATCC 204508 / S288c) (Baker's yeast).